The primary structure comprises 478 residues: PRAME family member 11 (478 aa).

The LRR 1; degenerate repeat unit spans residues 99–126 (RWKLQVLDLQDVCENFWMVWSEAMAHGC). Residues 181–205 (HLCCKKLKILGMPFRNIRSILKMVN) form an LRR 2; degenerate repeat. The stretch at 206-232 (LDCIQEVEVNCKWILPILTQFTPYLGH) is one LRR 3; degenerate repeat. One copy of the LRR 4; degenerate repeat lies at 233–268 (LRNLQKLVLSHMDVSRYVSPEQKKEIVTQFTTQFLK). 5 LRR repeats span residues 269-294 (LRCL…LSCL), 295-326 (KTSL…SQLK), 327-347 (TLDL…QILL), 351-378 (AATL…ALSR), and 379-403 (CFEL…LLSH).

Belongs to the PRAME family.

This Homo sapiens (Human) protein is PRAME family member 11.